The primary structure comprises 436 residues: Acetylcholine receptor non-alpha chain (436 aa).

Over I1 to P195 the chain is Extracellular. A glycan (N-linked (GlcNAc...) asparagine) is linked at N62. A disulfide bridge links C89 with C103. The N-linked (GlcNAc...) asparagine glycan is linked to N140. A run of 3 helical transmembrane segments spans residues L196–L219, V227–K245, and Y261–L280. Residues N281–R404 lie on the Cytoplasmic side of the membrane. Residues L405–F423 traverse the membrane as a helical segment.

The protein belongs to the ligand-gated ion channel (TC 1.A.9) family. Acetylcholine receptor (TC 1.A.9.1) subfamily.

The protein resides in the postsynaptic cell membrane. It localises to the cell membrane. In terms of biological role, after binding acetylcholine, the AChR responds by an extensive change in conformation that affects all subunits and leads to opening of an ion-conducting channel across the plasma membrane. The chain is Acetylcholine receptor non-alpha chain from Onchocerca volvulus.